A 63-amino-acid polypeptide reads, in one-letter code: Beta-defensin 3 (63 aa).

Residues methionine 1–alanine 20 form the signal peptide. Positions phenylalanine 21–serine 22 are excised as a propeptide. 3 cysteine pairs are disulfide-bonded: cysteine 31-cysteine 59, cysteine 38-cysteine 52, and cysteine 42-cysteine 60.

This sequence belongs to the beta-defensin family. LAP/TAP subfamily. As to expression, highest expression in salivary glands, epididymis, ovary and pancreas and to a lesser extent in lung, liver and brain. Low or no expression in skeletal muscle and tongue.

Its subcellular location is the secreted. In terms of biological role, antimicrobial activity against Gram-negative bacteria E.coli and P.aeruginosa. The sequence is that of Beta-defensin 3 (Defb3) from Mus musculus (Mouse).